Here is a 342-residue protein sequence, read N- to C-terminus: RNA 3'-terminal phosphate cyclase (342 aa).

ATP is bound by residues glutamine 102 and 283-287 (HLADQ). Catalysis depends on histidine 308, which acts as the Tele-AMP-histidine intermediate.

It belongs to the RNA 3'-terminal cyclase family. Type 1 subfamily.

It is found in the cytoplasm. The catalysed reaction is a 3'-end 3'-phospho-ribonucleotide-RNA + ATP = a 3'-end 2',3'-cyclophospho-ribonucleotide-RNA + AMP + diphosphate. Catalyzes the conversion of 3'-phosphate to a 2',3'-cyclic phosphodiester at the end of RNA. The mechanism of action of the enzyme occurs in 3 steps: (A) adenylation of the enzyme by ATP; (B) transfer of adenylate to an RNA-N3'P to produce RNA-N3'PP5'A; (C) and attack of the adjacent 2'-hydroxyl on the 3'-phosphorus in the diester linkage to produce the cyclic end product. The biological role of this enzyme is unknown but it is likely to function in some aspects of cellular RNA processing. The chain is RNA 3'-terminal phosphate cyclase from Pseudomonas fluorescens (strain ATCC BAA-477 / NRRL B-23932 / Pf-5).